A 92-amino-acid chain; its full sequence is MGRSLKKGPFVDEHLMKKVEAQTNAERKSVIKTWSRRSTIFPNFVGLTIAVYDGRKHVPVYVQEDMVGHKLGEFAPTRTYRGHAADDKKTRR.

The protein belongs to the universal ribosomal protein uS19 family.

Protein S19 forms a complex with S13 that binds strongly to the 16S ribosomal RNA. This chain is Small ribosomal subunit protein uS19, found in Lactococcus lactis subsp. cremoris (strain MG1363).